The sequence spans 707 residues: Leucine-rich repeat neuronal protein 3 (707 aa).

Positions 1–22 (MKDAPLQIHVLLGLAITALVQA) are cleaved as a signal peptide. Residues 23–69 (GDKKVDCPQLCTCEIRPWFTPRSIYMEASTVDCNDLGLLNFPARLPA) form the LRRNT domain. The Extracellular portion of the chain corresponds to 23–626 (GDKKVDCPQL…DGKENGKSHT (604 aa)). 12 LRR repeats span residues 70 to 91 (DTQI…TDFP), 93 to 114 (NLTG…NVQK), 117 to 138 (QLLS…CLYG), 141 to 162 (NLQE…AFVG), 165 to 186 (NLLR…WFEA), 189 to 210 (NLEI…NFQP), 213 to 234 (KLRS…ALVG), 237 to 258 (NLES…ALQK), 261 to 282 (NLKF…DFSN), 285 to 304 (HLKE…DSLA), 310 to 332 (DLRK…AFFR), and 335 to 358 (KLES…ESLP). 2 N-linked (GlcNAc...) asparagine glycosylation sites follow: Asn-93 and Asn-103. N-linked (GlcNAc...) asparagine glycosylation occurs at Asn-223. One can recognise an LRRCT domain in the interval 368–421 (NPIRCDCVIRWINMNKTNIRFMEPDSLFCVDPPEFQGQNVRQVHFRDMMEICLP). The N-linked (GlcNAc...) asparagine glycan is linked to Asn-382. The Ig-like C2-type domain occupies 421-514 (PLIAPESFPS…DLKSIMIKVG (94 aa)). Cys-444 and Cys-496 are joined by a disulfide. N-linked (GlcNAc...) asparagine glycans are attached at residues Asn-522, Asn-579, and Asn-608. The Fibronectin type-III domain occupies 523–614 (GSLNIKIRDI…QCVNVTTKSL (92 aa)). Residues 627–647 (VFVACVGGLLGIIGVMCLFGC) form a helical membrane-spanning segment. The Cytoplasmic segment spans residues 648–707 (VSQEGNCENEHSYTVNHCHKPTLAFSELYPPLINLWESSKEKPASLEVKATAIGVPTSMS).

It is found in the membrane. The protein is Leucine-rich repeat neuronal protein 3 (Lrrn3) of Rattus norvegicus (Rat).